We begin with the raw amino-acid sequence, 199 residues long: Recombination protein RecR (199 aa).

A C4-type zinc finger spans residues 58-73 (CSVCTNLTDRDPCRIC). Residues 81–176 (AVICVVEEPR…KVTRIAHGLP (96 aa)) enclose the Toprim domain.

Belongs to the RecR family.

In terms of biological role, may play a role in DNA repair. It seems to be involved in an RecBC-independent recombinational process of DNA repair. It may act with RecF and RecO. This chain is Recombination protein RecR, found in Heliobacterium modesticaldum (strain ATCC 51547 / Ice1).